A 345-amino-acid polypeptide reads, in one-letter code: tRNA N6-adenosine threonylcarbamoyltransferase (345 aa).

The Fe cation site is built by His-111 and His-115. Residues 134–138, Asp-167, Gly-180, and Asn-277 each bind substrate; that span reads LVSGG. Residue Asp-305 coordinates Fe cation.

Belongs to the KAE1 / TsaD family. Fe(2+) serves as cofactor.

The protein localises to the cytoplasm. The catalysed reaction is L-threonylcarbamoyladenylate + adenosine(37) in tRNA = N(6)-L-threonylcarbamoyladenosine(37) in tRNA + AMP + H(+). Required for the formation of a threonylcarbamoyl group on adenosine at position 37 (t(6)A37) in tRNAs that read codons beginning with adenine. Is involved in the transfer of the threonylcarbamoyl moiety of threonylcarbamoyl-AMP (TC-AMP) to the N6 group of A37, together with TsaE and TsaB. TsaD likely plays a direct catalytic role in this reaction. In Laribacter hongkongensis (strain HLHK9), this protein is tRNA N6-adenosine threonylcarbamoyltransferase.